We begin with the raw amino-acid sequence, 491 residues long: Keratin, type I cytoskeletal 39 (491 aa).

Residues 1–96 (MDTKGCTTTN…WYGEGINSNE (96 aa)) are head. The region spanning 96–407 (EKETMQILNE…SLLESSDGKR (312 aa)) is the IF rod domain. Residues 97–131 (KETMQILNERLANYLQKVRMLERENAELESKIQEE) are coil 1A. A linker 1 region spans residues 132–142 (SNKELPVLCPD). Residues 143-243 (YLSYYTTIEE…HKEEINSLQC (101 aa)) form a coil 1B region. The segment at 244 to 259 (QLGERLDIEVTAAPSA) is linker 12. Residues 260–403 (DLNQVLQEMR…TTYRSLLESS (144 aa)) form a coil 2 region. Residues 404-491 (DGKRPCYPRA…PCFIIRPAKV (88 aa)) are tail.

Belongs to the intermediate filament family. In terms of assembly, heterotetramer of two type I and two type II keratins. Expressed in skin and scalp. In the hair follicle, it is present in the upper hair cuticle and the upper cortex. Also present in the in the upper portion of beard hairs (at protein level).

In terms of biological role, may play a role in late hair differentiation. The polypeptide is Keratin, type I cytoskeletal 39 (KRT39) (Homo sapiens (Human)).